A 211-amino-acid chain; its full sequence is Putative transposase for insertion sequence element IS402 (211 aa).

The disordered stretch occupies residues arginine 51–lysine 71.

The protein belongs to the transposase 11 family.

Functionally, involved in the transposition of the insertion sequence. The chain is Putative transposase for insertion sequence element IS402 from Burkholderia cepacia (Pseudomonas cepacia).